We begin with the raw amino-acid sequence, 470 residues long: Zinc finger protein weckle (470 aa).

Positions 1 to 103 (MGVPTSDWIY…DALRLEYGLP (103 aa)) are required for homodimerization. A ZAD domain is found at 10–82 (YWCRLCARDD…SKVQAIFELL (73 aa)). The Zn(2+) site is built by Cys12, Cys15, Cys55, and Cys58. The disordered stretch occupies residues 156–265 (NSDPKVLASP…LSMSPHGSQS (110 aa)). Ser168 is subject to Phosphoserine. Acidic residues predominate over residues 195–208 (ESDDEEAILDEDEA). A compositionally biased stretch (basic residues) spans 214 to 225 (LKRKRGRPKGSG). The segment covering 237–254 (TSREPDDNAKSKQDDKTS) has biased composition (basic and acidic residues). The span at 255–265 (ELSMSPHGSQS) shows a compositional bias: polar residues. C2H2-type zinc fingers lie at residues 271–294 (YPCKICNETFMSFMALRRHKHDMH), 300–322 (YVCDHCGKGLKTFTSLVEHQLVH), 328–350 (CICPVCNAGFKNKARLRVHSQTH), 355–377 (FECNVCGKKLQTRAILNKHKYVH), 383–405 (FKCEVCGSGCKNSTALKIHLLGH), and 411–434 (YVCKYCGKAFASNTNCRSHKWKKH).

Homodimer. Interacts with Myd88 and Toll.

It localises to the cell membrane. Acts as an adapter to assemble/stabilize a Toll/wek/Myd88/tube complex; required for efficient recruitment of Myd88 to Toll. Dispensable for innate immune response; plays a minimal role, if any, in the immune defense against Gram-positive bacteria and fungi. Involved in dorsoventral axis determination. The polypeptide is Zinc finger protein weckle (Drosophila melanogaster (Fruit fly)).